A 185-amino-acid chain; its full sequence is Ribosome-recycling factor (185 aa).

The segment at 135–159 (ANDKLKASEKNKEASEDEVKRAQEK) is disordered.

This sequence belongs to the RRF family.

The protein localises to the cytoplasm. In terms of biological role, responsible for the release of ribosomes from messenger RNA at the termination of protein biosynthesis. May increase the efficiency of translation by recycling ribosomes from one round of translation to another. The chain is Ribosome-recycling factor from Moorella thermoacetica (strain ATCC 39073 / JCM 9320).